The primary structure comprises 198 residues: Recombination protein RecR (198 aa).

The segment at 57–72 (CSVCCNLTDQDPCQIC) adopts a C4-type zinc-finger fold. A Toprim domain is found at 80 to 175 (STICVVQEPR…KVTRIARGLP (96 aa)).

It belongs to the RecR family.

In terms of biological role, may play a role in DNA repair. It seems to be involved in an RecBC-independent recombinational process of DNA repair. It may act with RecF and RecO. This is Recombination protein RecR from Symbiobacterium thermophilum (strain DSM 24528 / JCM 14929 / IAM 14863 / T).